Here is a 214-residue protein sequence, read N- to C-terminus: Probable transaldolase (214 aa).

Lysine 83 acts as the Schiff-base intermediate with substrate in catalysis.

It belongs to the transaldolase family. Type 3B subfamily.

The protein resides in the cytoplasm. The enzyme catalyses D-sedoheptulose 7-phosphate + D-glyceraldehyde 3-phosphate = D-erythrose 4-phosphate + beta-D-fructose 6-phosphate. Its pathway is carbohydrate degradation; pentose phosphate pathway; D-glyceraldehyde 3-phosphate and beta-D-fructose 6-phosphate from D-ribose 5-phosphate and D-xylulose 5-phosphate (non-oxidative stage): step 2/3. Its function is as follows. Transaldolase is important for the balance of metabolites in the pentose-phosphate pathway. This Carboxydothermus hydrogenoformans (strain ATCC BAA-161 / DSM 6008 / Z-2901) protein is Probable transaldolase.